The chain runs to 759 residues: Catalase-peroxidase (759 aa).

Residues 1–24 (MTQDKCPFKEQSSQPNFAGGGTSN) form a disordered region. The segment at residues 96-242 (WHSAGTYRVF…LAAAHMGLIY (147 aa)) is a cross-link (tryptophyl-tyrosyl-methioninium (Trp-Tyr) (with M-268)). Residue H97 is the Proton acceptor of the active site. The tryptophyl-tyrosyl-methioninium (Tyr-Met) (with W-96) cross-link spans 242-268 (YVNPEGPDGNPDPVAAAHDIRDTFGRM). Heme b is bound at residue H283.

Belongs to the peroxidase family. Peroxidase/catalase subfamily. Homodimer or homotetramer. Requires heme b as cofactor. In terms of processing, formation of the three residue Trp-Tyr-Met cross-link is important for the catalase, but not the peroxidase activity of the enzyme.

The protein localises to the cytoplasm. It carries out the reaction H2O2 + AH2 = A + 2 H2O. The enzyme catalyses 2 H2O2 = O2 + 2 H2O. Its function is as follows. Bifunctional enzyme with both catalase and broad-spectrum peroxidase activity. The protein is Catalase-peroxidase of Aspergillus fumigatus (strain CBS 144.89 / FGSC A1163 / CEA10) (Neosartorya fumigata).